Here is a 423-residue protein sequence, read N- to C-terminus: Serine--tRNA ligase (423 aa).

231–233 (TAE) is an L-serine binding site. 262 to 264 (RSE) contributes to the ATP binding site. Residue E285 participates in L-serine binding. Residue 349-352 (EISS) coordinates ATP. An L-serine-binding site is contributed by S384.

This sequence belongs to the class-II aminoacyl-tRNA synthetase family. Type-1 seryl-tRNA synthetase subfamily. In terms of assembly, homodimer. The tRNA molecule binds across the dimer.

It is found in the cytoplasm. The enzyme catalyses tRNA(Ser) + L-serine + ATP = L-seryl-tRNA(Ser) + AMP + diphosphate + H(+). It carries out the reaction tRNA(Sec) + L-serine + ATP = L-seryl-tRNA(Sec) + AMP + diphosphate + H(+). It functions in the pathway aminoacyl-tRNA biosynthesis; selenocysteinyl-tRNA(Sec) biosynthesis; L-seryl-tRNA(Sec) from L-serine and tRNA(Sec): step 1/1. Its function is as follows. Catalyzes the attachment of serine to tRNA(Ser). Is also able to aminoacylate tRNA(Sec) with serine, to form the misacylated tRNA L-seryl-tRNA(Sec), which will be further converted into selenocysteinyl-tRNA(Sec). In Lactococcus lactis subsp. cremoris (strain SK11), this protein is Serine--tRNA ligase.